The sequence spans 495 residues: Neuronal acetylcholine receptor subunit beta-4 (495 aa).

Residues 1–20 (MRGTPLLLVSLFALLQPGDC) form the signal peptide. Residues 21-235 (RLANAEEKLM…IIKRKPLFYT (215 aa)) are Extracellular-facing. Asn-35, Asn-92, Asn-137, and Asn-165 each carry an N-linked (GlcNAc...) asparagine glycan. A disulfide bridge connects residues Cys-152 and Cys-166. A helical transmembrane segment spans residues 236-256 (INLIIPCVLITSLAILVFYLP). At 257–264 (SDCGEKMT) the chain is on the cytoplasmic side. A Na(+)-binding site is contributed by Glu-261. Residues 265-285 (LCISVLLALTFFLLLISKIVP) traverse the membrane as a helical segment. Topologically, residues 286-297 (PTSLDIPLIGKY) are extracellular. The helical transmembrane segment at 298–318 (LLFTMVLVTFSIVTTVCVLNV) threads the bilayer. The Cytoplasmic portion of the chain corresponds to 319–463 (HHRSPSTHTM…WKFVAMVVDR (145 aa)). Residues 464–484 (LFLWVFVIVCILGTMGLFLPP) traverse the membrane as a helical segment. The Extracellular portion of the chain corresponds to 485–495 (LFQIHAPSKGL).

Belongs to the ligand-gated ion channel (TC 1.A.9) family. Acetylcholine receptor (TC 1.A.9.1) subfamily. Beta-4/CHRNB4 sub-subfamily. As to quaternary structure, neuronal AChR is composed of two different types of subunits: alpha and beta. CHRNB4/Beta-4 subunit can be combined to CHRNA2/alpha-2, CHRNA3/alpha-3 or CHRNA4/alpha-4, CHRNA5/alpha-5 and CHRNB3/beta-3 to give rise to functional receptors. Forms stoichiometries such as (CHRNA3)2:(CHRNB4)3 or (CHRNA3:CHRNB4)2:CHRNB3. Interacts with RIC3; which is required for proper folding and assembly. Interacts with LYPD6. In terms of tissue distribution, predominantly expressed by immature T-cells in the thymus.

Its subcellular location is the synaptic cell membrane. The protein resides in the cell membrane. It carries out the reaction K(+)(in) = K(+)(out). The catalysed reaction is Na(+)(in) = Na(+)(out). The enzyme catalyses Ca(2+)(in) = Ca(2+)(out). With respect to regulation, activated by a myriad of ligands such as acetylcholine, cytisine, nicotine, choline and epibatidine. The heteropentamer CHRNA3:CHRNB4 activity is blocked by the alpha-conotoxin ImI and AuIB. Functionally, component of neuronal acetylcholine receptors (nAChRs) that function as pentameric, ligand-gated cation channels with high calcium permeability among other activities. nAChRs are excitatory neurotrasnmitter receptors formed by a collection of nAChR subunits known to mediate synaptic transmission in the nervous system and the neuromuscular junction. Each nAchR subunit confers differential attributes to channel properties, including activation, deactivation and desensitization kinetics, pH sensitivity, cation permeability, and binding to allosteric modulators. CHRNB4 forms heteropentameric neuronal acetylcholine receptors with CHRNA2, CHRNA3 and CHRNA4, as well as CHRNA5 and CHRNB3 as accesory subunits. CHRNA3:CHRNB4 being predominant in neurons of the autonomic ganglia, it is known as ganglionic nicotinic receptor. CHRNA3:CHRNB4 or CHRNA3:CHRNA5:CHRNB4 play also an important role in the habenulo-interpeduncular tract, modulating the mesolimbic dopamine system and affecting reward circuits and addiction. Hypothalamic CHRNA3:CHRNB4 nAChR activation by nicotine leads to activation of POMC neurons and a decrease in food intake. The protein is Neuronal acetylcholine receptor subunit beta-4 (Chrnb4) of Mus musculus (Mouse).